The following is a 344-amino-acid chain: Large ribosomal subunit protein uL3 (344 aa).

Belongs to the universal ribosomal protein uL3 family. Part of the 50S ribosomal subunit. Forms a cluster with proteins L14 and L24e.

Its function is as follows. One of the primary rRNA binding proteins, it binds directly near the 3'-end of the 23S rRNA, where it nucleates assembly of the 50S subunit. This Aeropyrum pernix (strain ATCC 700893 / DSM 11879 / JCM 9820 / NBRC 100138 / K1) protein is Large ribosomal subunit protein uL3.